The primary structure comprises 177 residues: Zinc metalloproteinase-disintegrin-like scutiarin (177 aa).

In terms of domain architecture, Disintegrin spans N1 to N63. 10 disulfide bridges follow: C3/C26, C17/C23, C22/C48, C35/C55, C42/C74, C67/C79, C86/C136, C101/C147, C114/C124, and C131/C173. Residues E41–D43 carry the D/ECD-tripeptide motif. Ca(2+)-binding residues include D43, P44, E46, D58, and V59.

Belongs to the venom metalloproteinase (M12B) family. P-III subfamily. P-IIIa sub-subfamily. Monomer. Zn(2+) is required as a cofactor. In terms of processing, glycosylated. As to expression, expressed by the venom gland.

It localises to the secreted. Snake venom metalloproteinase that impairs hemostasis in the envenomed animal. This Crotalus scutulatus scutulatus (Mojave rattlesnake) protein is Zinc metalloproteinase-disintegrin-like scutiarin.